Reading from the N-terminus, the 251-residue chain is Capsid protein (251 aa).

A disordered region spans residues 1 to 27 (MPKRDLPWRSMPGTSKTSRNANYSPRA). Residues 3–20 (KRDLPWRSMPGTSKTSRN) carry the Bipartite nuclear localization signal motif. Positions 12-23 (PGTSKTSRNANY) are enriched in polar residues. The Nuclear localization signal signature appears at 35–49 (KASEWVHRPMYRKPR). A zinc finger lies at 63-80 (CEGPCKVQSYEQRHDISH). A Nuclear export signal motif is present at residues 96–117 (ITHRVGKRFCVKSVYILGKIWM). Residues 195-242 (KRFWKVNNHVVYNHQEAGKYENHTENALLLYMACTHASNPVYATLKIR) carry the Bipartite nuclear localization signal motif.

Belongs to the geminiviridae capsid protein family. As to quaternary structure, homomultimer. Binds to single-stranded and double-stranded viral DNA. Interacts (via nuclear localization signals) with host importin alpha-1a.

The protein resides in the virion. It localises to the host nucleus. Functionally, encapsidates the viral DNA into characteristic twinned ('geminate') particles. Binds the genomic viral ssDNA and shuttles it into and out of the cell nucleus. The CP of bipartite geminiviruses is not required for cell-to-cell or systemic movement. The chain is Capsid protein from Abutilon (Upland cotton).